The sequence spans 221 residues: Pyridoxal phosphate homeostasis protein (221 aa).

Position 26 is an N6-(pyridoxal phosphate)lysine (lysine 26).

Belongs to the pyridoxal phosphate-binding protein YggS/PROSC family.

Pyridoxal 5'-phosphate (PLP)-binding protein, which is involved in PLP homeostasis. The sequence is that of Pyridoxal phosphate homeostasis protein from Corynebacterium glutamicum (strain ATCC 13032 / DSM 20300 / JCM 1318 / BCRC 11384 / CCUG 27702 / LMG 3730 / NBRC 12168 / NCIMB 10025 / NRRL B-2784 / 534).